The chain runs to 238 residues: uncharacterized protein (238 aa).

A run of 3 helical transmembrane segments spans residues 19–39, 79–99, and 141–161; these read IVIEAFPGTGLVGSIAGFQII, IILFSDIIISPFKINGLAEFI, and YVEIFDFGVVGGMGGNLLIKC.

The protein localises to the cell membrane. This is an uncharacterized protein from Methanocaldococcus jannaschii (strain ATCC 43067 / DSM 2661 / JAL-1 / JCM 10045 / NBRC 100440) (Methanococcus jannaschii).